Reading from the N-terminus, the 100-residue chain is uncharacterized protein (100 aa).

The signal sequence occupies residues 1 to 18 (MWGFLVLKARWLVTPVRT). The disordered stretch occupies residues 48 to 86 (LTRGVIRVSPQERSQQNQSAPKGPTPSTRPKPRTLGPQA). The span at 58–69 (QERSQQNQSAPK) shows a compositional bias: polar residues. N-linked (GlcNAc...) asparagine glycosylation occurs at asparagine 64.

The protein localises to the secreted. This is an uncharacterized protein from Homo sapiens (Human).